The following is a 714-amino-acid chain: Macrophage-expressed gene 1 protein (714 aa).

Positions 1–19 are cleaved as a signal peptide; sequence MNSFMAIALIWMMIACAEA. The 316-residue stretch at 30–345 folds into the MACPF domain; it reads GFQTCKDTLK…TAVRHYYTFN (316 aa). Cysteines 34 and 70 form a disulfide. 2 consecutive transmembrane segments (beta stranded) span residues 113 to 120 and 127 to 132; these read FSINTELS and GKFSTE. Residue N185 is glycosylated (N-linked (GlcNAc...) asparagine). 2 consecutive transmembrane segments (beta stranded) span residues 235–244 and 248–256; these read TVTASAGIAF and VNFKVETDH. N-linked (GlcNAc...) asparagine glycosylation occurs at N269. Cysteines 350 and 369 form a disulfide. An N-linked (GlcNAc...) asparagine glycan is attached at N375. 5 disulfide bridges follow: C385–C394, C432–C446, C436–C442, C531–C569, and C554–C574. The P2 stretch occupies residues 410 to 653; it reads PSGYTPVHLL…GDGNGMSGGE (244 aa). The chain crosses the membrane as a helical span at residues 654 to 674; it reads AAGVTLGVIIALGIVITLAIY. A disordered region spans residues 690–714; sequence EQESLVGSFATDASPPNGEQDPCPA.

It belongs to the MPEG1 family. In terms of assembly, homooligomer; predominantly forms a homooligomeric arc-shaped pore complex instead of complete rings of 16 subunits. Proteolytically processed in two steps to generate the Macrophage-expressed gene 1 protein, processed form: cleaved by trypsin in proximity of the helical transmembrane domain releases the ectodomain into the lysosomal lumen to orient the pore-forming domain toward the endogenous membranes, and processed by the asparagine endopeptidase (LGMN). Proteolytic processing in antigen-containing vesicles is pH-dependent. Post-translationally, monoubiquitinated in response to bacterial infection; ubiquitination is required for vesicular localization and antibacterial activity and can be blocked by bacterial cell cycle inhibiting factor (cif).

It localises to the cytoplasmic vesicle membrane. The protein resides in the cytoplasmic vesicle. The protein localises to the phagosome membrane. Its activity is regulated as follows. Forms arc- and ring-shaped pre-pores on top of the membrane at neutral to slightly acidic pH conditions and converts to pores upon acidification. Undergoes transition from the pre-pore to the pore in a processive clockwise hand-over-hand process. In the pore state, 2 alpha-helical regions refold into transmembrane hairpins (TMH1 and TMH2) in each protomer that form in the ensemble complex giant beta-barrel transmembrane pores. Pore-forming protein involved in both innate and adaptive immunity. Plays a central role in antigen cross-presentation in dendritic cells by forming a pore in antigen-containing compartments, thereby promoting delivery of antigens for cross-presentation. Also involved in innate immune response following bacterial infection; shows antibacterial activity against a wide spectrum of Gram-positive, Gram-negative and acid-fast bacteria. Reduces the viability of the intracytosolic pathogen L.monocytogenes by inhibiting acidification of the phagocytic vacuole of host cells which restricts bacterial translocation from the vacuole to the cytosol. Required for the antibacterial activity of reactive oxygen species and nitric oxide. Functionally, pore-forming protein that plays a central role in antigen cross-presentation in dendritic cells by mediating delivery of antigens for cross-presentation. Dendritic cells bridge innate and adaptive immunity by capturing exogenous antigens on MHC class-I molecules and presenting them to naive CD8(+) T-cells. Acts by forming a pore in antigen-containing compartments, promoting the release of antigens into the cytosol, enabling generation of MHCI:peptide complexes and T-cell priming. The polypeptide is Macrophage-expressed gene 1 protein (Mpeg1) (Rattus norvegicus (Rat)).